We begin with the raw amino-acid sequence, 173 residues long: MFKLDLKRFIRDIPDFPQKGIVFRDITPLLRNQEAFKEAIDRMCELVFDREFDLVVAPEARGFILGAAMAYKLGKGFVPVRKPGKLPYKTVYEEYQLEYGTEQLHIHEDAIEKGQKVLIVDDVLATGGTAEALIRLVKKLGGEVVSLAFLVELSYLEPRKRLEGYDVKTLIVY.

It belongs to the purine/pyrimidine phosphoribosyltransferase family. As to quaternary structure, homodimer.

It localises to the cytoplasm. It carries out the reaction AMP + diphosphate = 5-phospho-alpha-D-ribose 1-diphosphate + adenine. Its pathway is purine metabolism; AMP biosynthesis via salvage pathway; AMP from adenine: step 1/1. Functionally, catalyzes a salvage reaction resulting in the formation of AMP, that is energically less costly than de novo synthesis. This is Adenine phosphoribosyltransferase from Thermotoga maritima (strain ATCC 43589 / DSM 3109 / JCM 10099 / NBRC 100826 / MSB8).